The sequence spans 476 residues: MAKEALIVKTTPLPQSRISFELEIPSETCKTCLNETISSISRSAKIPGFRVGKIPKQVLIQRIGITQLHASALEKIIDKSWQEALKIKSIEPLSEPELVDGFESVLANFSPEKPLKVTLQTDVAPELKLKKSKGLSVEISKTKFDPKSIDEALQKSRSQFANIIPVTNRAARLGDIAVVSFKGKYKDSDKEIDGGTSESMDLELEKNKMIPGFVEGIVKMKIGDTKTLNLKFPEDYSHEDSRGKEAIFEVNLKDLKEKELPELNDDFAKQSGNKESLKELKKDIEKQLKDNFEKTQKDIKIEALLDALTNELVAEIPKSMIDIEVRNNIEQTAQRFAQQGLDVKSTFTPELVKSLAESTRPQAEKNVQRNLALKALAETENIKVEKDEIDLKMKDYEDAISQSSKQIDIKKLTEVISNDLLKEKLIIWLEENSEVKENTTKTSKTTKNSKTTKATKTTKTTKTTKTSKTQNKKEKK.

One can recognise a PPIase FKBP-type domain in the interval 174-261 (GDIAVVSFKG…LKDLKEKELP (88 aa)). A disordered region spans residues 436-476 (KENTTKTSKTTKNSKTTKATKTTKTTKTTKTSKTQNKKEKK). Residues 440–469 (TKTSKTTKNSKTTKATKTTKTTKTTKTSKT) show a composition bias toward low complexity.

Belongs to the FKBP-type PPIase family. Tig subfamily.

The protein localises to the cytoplasm. It carries out the reaction [protein]-peptidylproline (omega=180) = [protein]-peptidylproline (omega=0). In terms of biological role, involved in protein export. Acts as a chaperone by maintaining the newly synthesized protein in an open conformation. Functions as a peptidyl-prolyl cis-trans isomerase. The chain is Trigger factor from Prochlorococcus marinus (strain MIT 9215).